We begin with the raw amino-acid sequence, 241 residues long: DNA repair protein RecO (241 aa).

Belongs to the RecO family.

In terms of biological role, involved in DNA repair and RecF pathway recombination. In Phocaeicola vulgatus (strain ATCC 8482 / DSM 1447 / JCM 5826 / CCUG 4940 / NBRC 14291 / NCTC 11154) (Bacteroides vulgatus), this protein is DNA repair protein RecO.